The primary structure comprises 122 residues: Large ribosomal subunit protein uL14 (122 aa).

The protein belongs to the universal ribosomal protein uL14 family. In terms of assembly, part of the 50S ribosomal subunit. Forms a cluster with proteins L3 and L19. In the 70S ribosome, L14 and L19 interact and together make contacts with the 16S rRNA in bridges B5 and B8.

Its function is as follows. Binds to 23S rRNA. Forms part of two intersubunit bridges in the 70S ribosome. This Rhizobium meliloti (strain 1021) (Ensifer meliloti) protein is Large ribosomal subunit protein uL14.